The sequence spans 278 residues: Alcohol dehydrogenase-related 31 kDa protein (278 aa).

NAD(+) is bound at residue 11–34 (YVADCGGIALETSKVLMTKNIAKL). Serine 139 contributes to the substrate binding site. Tyrosine 152 (proton acceptor) is an active-site residue.

The protein belongs to the short-chain dehydrogenases/reductases (SDR) family.

The protein is Alcohol dehydrogenase-related 31 kDa protein (Adhr) of Drosophila pseudoobscura pseudoobscura (Fruit fly).